The chain runs to 309 residues: MGLRFPTATQRQIVFRRLFDSGNNDDYDEAAVVAVLGWVHRFEVVVRIAGLLLFQISTAVAVLGSFSLVFPTATLKSRPGFPCHVVWAPEVLLLVPVASALFVYFRYERPVLAQRNRHPRCRRPFRQLVLLLAGLLAHIPALGVTCACQEPREVLTSFVLTLVITLLCAEVVFICRDNCTLSDQFALINGVWVVVFLANVLIVFTRPWTWPLRLLLGFYSTVGLIFAGHFSQQVLFVRHVLMPRDVAHTSLQLFITFISLFFLILRIRNCQDLLSDLRLLELPSSDAMTLTPNDLSHASSSTPLSTLSP.

Transmembrane regions (helical) follow at residues 50 to 70 (GLLL…SLVF), 85 to 105 (VVWA…FVYF), 128 to 148 (LVLL…TCAC), 154 to 174 (VLTS…VVFI), 185 to 205 (FALI…IVFT), 210 to 230 (WPLR…AGHF), and 245 to 265 (DVAH…FLIL).

Belongs to the cytomegalovirus US12 family.

Its subcellular location is the host membrane. The protein resides in the host cytoplasm. The protein is Protein US16 (US16) of Human cytomegalovirus (strain Merlin) (HHV-5).